The following is a 263-amino-acid chain: MTVCVAQAERGASELESKAMVKKSNDAALLVAHRIAEVVRSKPNCVLGLATGSTPIPVYQELARLHREEGLDFSQVRTFNLDEYAGLPPTHDQSYRFFMEEHLFSKVNIKPENVHFLSGLAIRAEDECIRYENALQTIGPCDVWLLGIGHNGHIAFNEPGSPRDSRTRVVCLTQSTIDANARFFGNDKSKVPTKALSVGIATIMESREILLLATGESKCEAVTKAIVGEPTNAVPASLLQRHPRCCFYVDEAAGAEVAETVTE.

D82 functions as the Proton acceptor; for enolization step in the catalytic mechanism. N151 (for ring-opening step) is an active-site residue. H153 serves as the catalytic Proton acceptor; for ring-opening step. The For ring-opening step role is filled by E158.

Belongs to the glucosamine/galactosamine-6-phosphate isomerase family. Homohexamer.

It carries out the reaction alpha-D-glucosamine 6-phosphate + H2O = beta-D-fructose 6-phosphate + NH4(+). In terms of biological role, catalyzes the reversible conversion of alpha-D-glucosamine 6-phosphate (GlcN-6P) into beta-D-fructose 6-phosphate (Fru-6P) and ammonium ion, a regulatory reaction step in de novo uridine diphosphate-N-acetyl-alpha-D-glucosamine (UDP-GlcNAc) biosynthesis via hexosamine pathway. In Giardia intestinalis (Giardia lamblia), this protein is Glucosamine-6-phosphate deaminase 2 (GPI2).